The following is a 367-amino-acid chain: Quinolinate synthase (367 aa).

Residues His45 and Ser62 each coordinate iminosuccinate. Cys109 is a binding site for [4Fe-4S] cluster. Iminosuccinate contacts are provided by residues 140–142 (YVN) and Ser161. Cys229 provides a ligand contact to [4Fe-4S] cluster. Residues 255–257 (HPE) and Thr272 each bind iminosuccinate. A [4Fe-4S] cluster-binding site is contributed by Cys319.

It belongs to the quinolinate synthase family. Type 3 subfamily. It depends on [4Fe-4S] cluster as a cofactor.

It localises to the cytoplasm. It carries out the reaction iminosuccinate + dihydroxyacetone phosphate = quinolinate + phosphate + 2 H2O + H(+). Its pathway is cofactor biosynthesis; NAD(+) biosynthesis; quinolinate from iminoaspartate: step 1/1. In terms of biological role, catalyzes the condensation of iminoaspartate with dihydroxyacetone phosphate to form quinolinate. This chain is Quinolinate synthase, found in Geobacillus kaustophilus (strain HTA426).